The sequence spans 75 residues: Sec-independent protein translocase protein TatA (75 aa).

Residues M1–T21 form a helical membrane-spanning segment. A disordered region spans residues S41–G75. The segment covering E56–Q65 has biased composition (low complexity). Positions A66–G75 are enriched in basic and acidic residues.

Belongs to the TatA/E family. The Tat system comprises two distinct complexes: a TatABC complex, containing multiple copies of TatA, TatB and TatC subunits, and a separate TatA complex, containing only TatA subunits. Substrates initially bind to the TatABC complex, which probably triggers association of the separate TatA complex to form the active translocon.

The protein localises to the cell inner membrane. In terms of biological role, part of the twin-arginine translocation (Tat) system that transports large folded proteins containing a characteristic twin-arginine motif in their signal peptide across membranes. TatA could form the protein-conducting channel of the Tat system. This Marinobacter nauticus (strain ATCC 700491 / DSM 11845 / VT8) (Marinobacter aquaeolei) protein is Sec-independent protein translocase protein TatA.